The following is a 192-amino-acid chain: Cell division protein SepF (192 aa).

Residues Gln-154–Ile-192 form a disordered region. The segment covering Val-162–Thr-178 has biased composition (low complexity).

This sequence belongs to the SepF family. As to quaternary structure, homodimer. Interacts with FtsZ.

It is found in the cytoplasm. Its function is as follows. Cell division protein that is part of the divisome complex and is recruited early to the Z-ring. Probably stimulates Z-ring formation, perhaps through the cross-linking of FtsZ protofilaments. Its function overlaps with FtsA. The chain is Cell division protein SepF from Prochlorococcus marinus (strain MIT 9211).